The sequence spans 497 residues: Subtilisin-like protease CPC735_031240 (497 aa).

The first 16 residues, 1 to 16 (MKGVLSLSLLPLLAAP), serve as a signal peptide directing secretion. Residues 17-136 (SPILVDTIHR…IEKDSEVHAW (120 aa)) constitute a propeptide that is removed on maturation. The 92-residue stretch at 43–134 (SYIVVFKKNV…QYIEKDSEVH (92 aa)) folds into the Inhibitor I9 domain. In terms of domain architecture, Peptidase S8 spans 146–452 (PWGLARVSHR…GGSSNYTAII (307 aa)). Residues D182 and H214 each act as charge relay system in the active site. N-linked (GlcNAc...) asparagine glycosylation is found at N244 and N284. The active-site Charge relay system is the S380. An N-linked (GlcNAc...) asparagine glycan is attached at N447.

Belongs to the peptidase S8 family.

It localises to the secreted. In terms of biological role, secreted subtilisin-like serine protease with keratinolytic activity that contributes to pathogenicity. This Coccidioides posadasii (strain C735) (Valley fever fungus) protein is Subtilisin-like protease CPC735_031240.